Consider the following 635-residue polypeptide: MYPLLETINSPADLRRLPRAQLKALADELRAFVLDSVSKTGGHLSSNLGTVELTVALHYVFNTPEDRLVWDVGHQTYPHKILTGRRDRMGSLRQFGGLSGFPRRDESPYDTFGTAHSSTSISAALGMALAAHQQGEDRHAVAIIGDGAMSAGMAFEALNNAGVHDDCKLLVVLNDNDMSISPPVGALNRYLAQLMSGRFYASAKNVGKQVLRVAPPLLELAKRLEAHAKGMVVPATLFENFGFNYIGPIDGHDLESLIPTLENIKHLKGPQFLHVVTKKGQGYKLAEADPVAYHGPGKFDPAMGLQKSSAPAKRTFTQVFGQWLCDMAEQDKRLVGITPAMREGSGMVEFHKRFPGRYHDVGIAEQHAVTFAAGMACEGLKPVVAIYSTFLQRGYDQLIHDVALQNLPVVFALDRAGLVGADGATHAGAYDIPFLRCIPNMSVACPADENECRKLLSSAFEQNHPVAVRYPRGAGAGVEPEPGLQPLPFGKGEIRREGSGVAILAFGTLLYPALQAAEKLGVTVVNMRWAKPLDTELLLKVAASHEALVTLEEGAIMGGAGSAVGEALQAAGLGKPLLQLGLKDEFIEHGDPAKLLALQGLDAAGIEAAVMARFGSVLQPEKSGKPAKPALKSVA.

Thiamine diphosphate is bound by residues H74 and 115 to 117 (AHS). Residue D146 participates in Mg(2+) binding. Thiamine diphosphate-binding positions include 147 to 148 (GA), N176, Y283, and E365. Position 176 (N176) interacts with Mg(2+).

It belongs to the transketolase family. DXPS subfamily. In terms of assembly, homodimer. The cofactor is Mg(2+). Thiamine diphosphate serves as cofactor.

It catalyses the reaction D-glyceraldehyde 3-phosphate + pyruvate + H(+) = 1-deoxy-D-xylulose 5-phosphate + CO2. It functions in the pathway metabolic intermediate biosynthesis; 1-deoxy-D-xylulose 5-phosphate biosynthesis; 1-deoxy-D-xylulose 5-phosphate from D-glyceraldehyde 3-phosphate and pyruvate: step 1/1. Functionally, catalyzes the acyloin condensation reaction between C atoms 2 and 3 of pyruvate and glyceraldehyde 3-phosphate to yield 1-deoxy-D-xylulose-5-phosphate (DXP). This Polaromonas sp. (strain JS666 / ATCC BAA-500) protein is 1-deoxy-D-xylulose-5-phosphate synthase.